We begin with the raw amino-acid sequence, 206 residues long: Thymidylate kinase (206 aa).

10–17 (GIDGAGKS) is a binding site for ATP.

The protein belongs to the thymidylate kinase family.

It catalyses the reaction dTMP + ATP = dTDP + ADP. Functionally, phosphorylation of dTMP to form dTDP in both de novo and salvage pathways of dTTP synthesis. This Neisseria gonorrhoeae (strain ATCC 700825 / FA 1090) protein is Thymidylate kinase.